The chain runs to 384 residues: MGSKKLKRVGLSQELCDRLSRHQILTCQDFLCLSPLELMKVTGLSYRGVHELLCMVSRACAPKMQTAYGIKAQRSADFSPAFLSTTLSALDEALHGGVACGSLTEITGPPGCGKTQFCIMMSILATLPTNMGGLEGAVVYIDTESAFSAERLVEIAESRFPRYFNTEEKLLLTSSKVHLYRELTCDEVLQRIESLEEEIISKGIKLVILDSVASVVRKEFDAQLQGNLKERNKFLAREASSLKYLAEEFSIPVILTNQITTHLSGALASQADLVSPADDLSLSEGTSGSSCVIAALGNTWSHSVNTRLILQYLDSERRQILIAKSPLAPFTSFVYTIKEEGLVLQETTFCSVTQAELNWAPEILPPQPPEQLGLQMCHHTQLIF.

The segment at Met-1–Ser-75 is interaction with RAD51C. Gly-108 to Thr-115 is an ATP binding site.

The protein belongs to the RecA family. RAD51 subfamily. As to quaternary structure, part of the BCDX2 complex consisting of RAD51B, RAD51C, RAD51D and XRCC2; the complex has a ring-like structure arranged into a flat disc around a central channel. The BCDX2 subcomplex RAD51B:RAD51C interacts with RAD51. Interacts with SWSAP1; involved in homologous recombination repair. Interacts with HELQ. Post-translationally, phosphorylated on tyrosine residues by BCR-ABL. As to expression, expressed in a wide range of tissues.

It localises to the nucleus. In terms of biological role, involved in the homologous recombination repair (HRR) pathway of double-stranded DNA breaks arising during DNA replication or induced by DNA-damaging agents. May promote the assembly of presynaptic RAD51 nucleoprotein filaments. Binds single-stranded DNA and double-stranded DNA and has DNA-dependent ATPase activity. Part of the RAD51 paralog protein complex BCDX2 which acts in the BRCA1-BRCA2-dependent HR pathway. Upon DNA damage, BCDX2 acts downstream of BRCA2 recruitment and upstream of RAD51 recruitment. BCDX2 binds predominantly to the intersection of the four duplex arms of the Holliday junction and to junction of replication forks. The BCDX2 complex was originally reported to bind single-stranded DNA, single-stranded gaps in duplex DNA and specifically to nicks in duplex DNA. The BCDX2 subcomplex RAD51B:RAD51C exhibits single-stranded DNA-dependent ATPase activity suggesting an involvement in early stages of the HR pathway. The sequence is that of DNA repair protein RAD51 homolog 2 (RAD51B) from Homo sapiens (Human).